Here is an 879-residue protein sequence, read N- to C-terminus: Beta-mannosidase (879 aa).

The first 17 residues, 1–17 (MLLRLLLLLAPCGAGFA), serve as a signal peptide directing secretion. Asparagine 35 and asparagine 77 each carry an N-linked (GlcNAc...) asparagine glycan. A disulfide bridge links cysteine 167 with cysteine 176. Residue 190–192 (WDW) coordinates substrate. Asparagine 297 is a glycosylation site (N-linked (GlcNAc...) asparagine). Residue asparagine 456 coordinates substrate. Catalysis depends on glutamate 457, which acts as the Proton donor. Cystine bridges form between cysteine 540/cysteine 629, cysteine 732/cysteine 761, and cysteine 764/cysteine 769. Glutamate 554 serves as the catalytic Nucleophile. Asparagine 803 carries an N-linked (GlcNAc...) asparagine glycan.

It belongs to the glycosyl hydrolase 2 family. As to quaternary structure, monomer. In terms of processing, N-glycosylated. In terms of tissue distribution, detected in kidney (at protein level). Found in spleen and to a lesser extent in liver. Not detected in kidney or brain.

It is found in the lysosome. It catalyses the reaction Hydrolysis of terminal, non-reducing beta-D-mannose residues in beta-D-mannosides.. The protein operates within glycan metabolism; N-glycan degradation. Its function is as follows. Exoglycosidase that cleaves the single beta-linked mannose residue from the non-reducing end of all N-linked glycoprotein oligosaccharides. The protein is Beta-mannosidase (MANBA) of Capra hircus (Goat).